The primary structure comprises 214 residues: tRNA (guanine-N(7)-)-methyltransferase (214 aa).

S-adenosyl-L-methionine-binding residues include aspartate 35, glutamate 60, asparagine 87, and aspartate 113. The active site involves aspartate 113. Lysine 117 and aspartate 149 together coordinate substrate.

The protein belongs to the class I-like SAM-binding methyltransferase superfamily. TrmB family.

The catalysed reaction is guanosine(46) in tRNA + S-adenosyl-L-methionine = N(7)-methylguanosine(46) in tRNA + S-adenosyl-L-homocysteine. Its pathway is tRNA modification; N(7)-methylguanine-tRNA biosynthesis. Functionally, catalyzes the formation of N(7)-methylguanine at position 46 (m7G46) in tRNA. This Prochlorococcus marinus (strain NATL2A) protein is tRNA (guanine-N(7)-)-methyltransferase.